Here is a 476-residue protein sequence, read N- to C-terminus: Glutamate--tRNA ligase (476 aa).

The short motif at Pro9–Thr19 is the 'HIGH' region element. A 'KMSKS' region motif is present at residues Lys248–Arg252. Lys251 serves as a coordination point for ATP.

The protein belongs to the class-I aminoacyl-tRNA synthetase family. Glutamate--tRNA ligase type 1 subfamily. As to quaternary structure, monomer.

Its subcellular location is the cytoplasm. The enzyme catalyses tRNA(Glu) + L-glutamate + ATP = L-glutamyl-tRNA(Glu) + AMP + diphosphate. In terms of biological role, catalyzes the attachment of glutamate to tRNA(Glu) in a two-step reaction: glutamate is first activated by ATP to form Glu-AMP and then transferred to the acceptor end of tRNA(Glu). The chain is Glutamate--tRNA ligase from Prochlorococcus marinus (strain MIT 9303).